The following is a 286-amino-acid chain: 33 kDa chaperonin (286 aa).

2 cysteine pairs are disulfide-bonded: Cys-225–Cys-227 and Cys-258–Cys-261.

It belongs to the HSP33 family. In terms of processing, under oxidizing conditions two disulfide bonds are formed involving the reactive cysteines. Under reducing conditions zinc is bound to the reactive cysteines and the protein is inactive.

Its subcellular location is the cytoplasm. Redox regulated molecular chaperone. Protects both thermally unfolding and oxidatively damaged proteins from irreversible aggregation. Plays an important role in the bacterial defense system toward oxidative stress. This chain is 33 kDa chaperonin, found in Shewanella sediminis (strain HAW-EB3).